The following is a 311-amino-acid chain: Tyrosine recombinase XerD (311 aa).

One can recognise a Core-binding (CB) domain in the interval 2–95 (KTLALQLQGY…AVRGLHRFAA (94 aa)). The 189-residue stretch at 116 to 304 (RLPKSLTIDE…TVHALREVWA (189 aa)) folds into the Tyr recombinase domain. Residues Arg-160, Lys-184, His-256, Arg-259, and His-282 contribute to the active site. Tyr-291 acts as the O-(3'-phospho-DNA)-tyrosine intermediate in catalysis.

The protein belongs to the 'phage' integrase family. XerD subfamily. As to quaternary structure, forms a cyclic heterotetrameric complex composed of two molecules of XerC and two molecules of XerD.

The protein resides in the cytoplasm. Functionally, site-specific tyrosine recombinase, which acts by catalyzing the cutting and rejoining of the recombining DNA molecules. The XerC-XerD complex is essential to convert dimers of the bacterial chromosome into monomers to permit their segregation at cell division. It also contributes to the segregational stability of plasmids. The protein is Tyrosine recombinase XerD of Mycobacterium tuberculosis (strain CDC 1551 / Oshkosh).